We begin with the raw amino-acid sequence, 145 residues long: Putative pre-16S rRNA nuclease (145 aa).

The protein belongs to the YqgF nuclease family.

The protein resides in the cytoplasm. Its function is as follows. Could be a nuclease involved in processing of the 5'-end of pre-16S rRNA. The polypeptide is Putative pre-16S rRNA nuclease (Opitutus terrae (strain DSM 11246 / JCM 15787 / PB90-1)).